An 82-amino-acid chain; its full sequence is EMBRYO SURROUNDING FACTOR 1.2 (82 aa).

The N-terminal stretch at 1–23 (MKSQTVLISIFIFSFFALHQCMQ) is a signal peptide. 4 disulfides stabilise this stretch: cysteine 40–cysteine 56, cysteine 45–cysteine 77, cysteine 54–cysteine 71, and cysteine 57–cysteine 64.

This sequence belongs to the MEG family. As to expression, expressed exclusively in ovule embryo sacs and in early developing endosperms.

Its function is as follows. Maternally-contributed central cell peptide regulating suspensor development and correct auxin distribution in early developing embryos. In Arabidopsis thaliana (Mouse-ear cress), this protein is EMBRYO SURROUNDING FACTOR 1.2 (ESF1.2).